The sequence spans 379 residues: cAMP-dependent protein kinase type I-alpha regulatory subunit (379 aa).

Methionine 1 bears the N-acetylmethionine mark. Positions 1–134 (MASSSTSSEE…ALAKAIEKNV (134 aa)) are dimerization and phosphorylation. Residues 63–93 (QMVSQQKSSSRSDSREDEVSPPMNPVVKGRR) are disordered. The short motif at 94 to 98 (RRGAI) is the Pseudophosphorylation motif element. 3',5'-cyclic AMP is bound by residues 135 to 252 (LFAH…SKVS), glutamate 200, arginine 209, 253 to 379 (ILES…SLSV), glutamate 324, and arginine 333.

This sequence belongs to the cAMP-dependent kinase regulatory chain family. As to quaternary structure, the inactive holoenzyme is composed of two regulatory chains and two catalytic chains. Activation by cAMP releases the two active catalytic monomers and the regulatory dimer. Interacts with PRKACA and PRKACB. Interacts with PRRC1; resulting in PKA activation. The pseudophosphorylation site binds to the substrate-binding region of the catalytic chain, resulting in the inhibition of its activity.

It localises to the cell membrane. Regulatory subunit of the cAMP-dependent protein kinases involved in cAMP signaling in cells. The polypeptide is cAMP-dependent protein kinase type I-alpha regulatory subunit (prkar1aa) (Danio rerio (Zebrafish)).